The sequence spans 252 residues: MDQVYSVAMAYILTLIISPLYSYLIGSLNASIILSLLLKKQDIRHFASKNAGMTNMTRVYGKKLGILTLFLDIVKPIITISLTYIIYKYALNAPFVLSNGFNQAILVYFGGIFTIIGHCYPIFFKFQGGKGVASYGGFLITIDPIVAVIGIITLLIILLITKYMSLSAMITATITCFLVLIPGINYIPYYNEHFVEYLFDLNHVIKGTWYVWLFLLISASILIYRHKTNILSIATKQERKTFLFQPKPKNNI.

6 consecutive transmembrane segments (helical) span residues 6–26 (SVAM…YLIG), 66–86 (ILTL…TYII), 104–124 (AILV…PIFF), 140–160 (ITID…ILLI), 164–184 (MSLS…IPGI), and 204–224 (VIKG…ILIY).

Belongs to the PlsY family. As to quaternary structure, probably interacts with PlsX.

The protein localises to the cell membrane. It catalyses the reaction an acyl phosphate + sn-glycerol 3-phosphate = a 1-acyl-sn-glycero-3-phosphate + phosphate. Its pathway is lipid metabolism; phospholipid metabolism. Catalyzes the transfer of an acyl group from acyl-phosphate (acyl-PO(4)) to glycerol-3-phosphate (G3P) to form lysophosphatidic acid (LPA). This enzyme utilizes acyl-phosphate as fatty acyl donor, but not acyl-CoA or acyl-ACP. The chain is Glycerol-3-phosphate acyltransferase from Ureaplasma urealyticum serovar 10 (strain ATCC 33699 / Western).